The chain runs to 500 residues: Prostacyclin synthase (500 aa).

The chain crosses the membrane as a helical span at residues 1-20 (MAWAALLGLLAALLLLLLLS). Residues Arg106, Leu112, Asn287, 358–359 (TR), and Arg382 contribute to the substrate site. Cys441 contacts heme.

Belongs to the cytochrome P450 family. It depends on heme as a cofactor. Widely expressed; particularly abundant in ovary, heart, skeletal muscle, lung and prostate.

It localises to the endoplasmic reticulum membrane. The catalysed reaction is prostaglandin H2 = prostaglandin I2. The enzyme catalyses a hydroperoxyeicosatetraenoate = an oxoeicosatetraenoate + H2O. It carries out the reaction (15S)-hydroperoxy-(5Z,8Z,11Z,13E)-eicosatetraenoate = 15-oxo-(5Z,8Z,11Z,13E)-eicosatetraenoate + H2O. It catalyses the reaction (15S)-hydroperoxy-(5Z,8Z,11Z,13E)-eicosatetraenoate + AH2 = (15S)-hydroxy-(5Z,8Z,11Z,13E)-eicosatetraenoate + A + H2O. Functionally, catalyzes the biosynthesis and metabolism of eicosanoids. Catalyzes the isomerization of prostaglandin H2 to prostacyclin (= prostaglandin I2), a potent mediator of vasodilation and inhibitor of platelet aggregation. Additionally, displays dehydratase activity, toward hydroperoxyeicosatetraenoates (HPETEs), especially toward (15S)-hydroperoxy-(5Z,8Z,11Z,13E)-eicosatetraenoate (15(S)-HPETE). This chain is Prostacyclin synthase (PTGIS), found in Homo sapiens (Human).